The following is a 356-amino-acid chain: Histidinol-phosphate aminotransferase (356 aa).

K214 is modified (N6-(pyridoxal phosphate)lysine).

The protein belongs to the class-II pyridoxal-phosphate-dependent aminotransferase family. Histidinol-phosphate aminotransferase subfamily. In terms of assembly, homodimer. Pyridoxal 5'-phosphate is required as a cofactor.

It catalyses the reaction L-histidinol phosphate + 2-oxoglutarate = 3-(imidazol-4-yl)-2-oxopropyl phosphate + L-glutamate. It functions in the pathway amino-acid biosynthesis; L-histidine biosynthesis; L-histidine from 5-phospho-alpha-D-ribose 1-diphosphate: step 7/9. In Escherichia coli O6:K15:H31 (strain 536 / UPEC), this protein is Histidinol-phosphate aminotransferase.